Reading from the N-terminus, the 511-residue chain is Endoglucanase B (511 aa).

The signal sequence occupies residues 1–29; sequence MNLLSGWVRPLMLGCGLLGAALSAGSIQA. Residues 30–130 form the CBM2 domain; it reads AVCEYRVTNE…AVTGAICGGQ (101 aa). A disulfide bridge connects residues cysteine 32 and cysteine 127. A disordered region spans residues 137 to 173; that stretch reads SVASSSSSSSVVSSTPRSSSSSVSSSVPGTSSSSSSS. The CBM10 domain occupies 180-209; the sequence is ACNWYGTLTPLCNNTSNGWGYEDGRSCVAR. Disulfide bonds link cysteine 181–cysteine 212 and cysteine 191–cysteine 206. Catalysis depends on aspartate 276, which acts as the Nucleophile. The Proton donor role is filled by aspartate 393.

Belongs to the glycosyl hydrolase 45 (cellulase K) family.

The protein resides in the periplasm. It carries out the reaction Endohydrolysis of (1-&gt;4)-beta-D-glucosidic linkages in cellulose, lichenin and cereal beta-D-glucans.. Functionally, this enzyme catalyzes the endohydrolysis of 1,4-beta-glucosidic linkages in cellulose, lichenin and cereal beta-D-glucans. EGB is most active against barley beta-glucan, but showed significant activity against amorphous and crystalline cellulose. In Cellvibrio japonicus (strain Ueda107) (Pseudomonas fluorescens subsp. cellulosa), this protein is Endoglucanase B (celB).